Here is a 235-residue protein sequence, read N- to C-terminus: Enolase-phosphatase E1 (235 aa).

The protein belongs to the HAD-like hydrolase superfamily. MasA/MtnC family. In terms of assembly, monomer. The cofactor is Mg(2+).

It catalyses the reaction 5-methylsulfanyl-2,3-dioxopentyl phosphate + H2O = 1,2-dihydroxy-5-(methylsulfanyl)pent-1-en-3-one + phosphate. The protein operates within amino-acid biosynthesis; L-methionine biosynthesis via salvage pathway; L-methionine from S-methyl-5-thio-alpha-D-ribose 1-phosphate: step 3/6. It functions in the pathway amino-acid biosynthesis; L-methionine biosynthesis via salvage pathway; L-methionine from S-methyl-5-thio-alpha-D-ribose 1-phosphate: step 4/6. In terms of biological role, bifunctional enzyme that catalyzes the enolization of 2,3-diketo-5-methylthiopentyl-1-phosphate (DK-MTP-1-P) into the intermediate 2-hydroxy-3-keto-5-methylthiopentenyl-1-phosphate (HK-MTPenyl-1-P), which is then dephosphorylated to form the acireductone 1,2-dihydroxy-3-keto-5-methylthiopentene (DHK-MTPene). This chain is Enolase-phosphatase E1, found in Gluconacetobacter diazotrophicus (strain ATCC 49037 / DSM 5601 / CCUG 37298 / CIP 103539 / LMG 7603 / PAl5).